We begin with the raw amino-acid sequence, 237 residues long: 3-oxoacyl-[acyl-carrier-protein] reductase (237 aa).

N-acetylmethionine is present on M1. NADP(+) contacts are provided by residues S11–I14, R34–N35, D56, and A83–G85. Substrate is bound at residue S135. NADP(+)-binding positions include Y148, K152, and I181 to T183. The active-site Proton acceptor is the Y148. Position 195 is an N6-acetyllysine (K195).

This sequence belongs to the short-chain dehydrogenases/reductases (SDR) family. Homotetramer (in vitro). Heterotetramer with HSD17B8; contains two molecules each of HSD17B8 and CBR4. Does not form homotetramers when HSD17B8 is coexpressed, only heterotetramers (in vitro).

Its subcellular location is the mitochondrion matrix. It carries out the reaction a (3R)-hydroxyacyl-[ACP] + NADP(+) = a 3-oxoacyl-[ACP] + NADPH + H(+). The enzyme catalyses a quinone + NADPH + H(+) = a quinol + NADP(+). Its pathway is lipid metabolism; fatty acid biosynthesis. Component of the heterotetramer complex KAR (3-ketoacyl-[acyl carrier protein] reductase or 3-ketoacyl-[ACP] reductase) that forms part of the mitochondrial fatty acid synthase (mtFAS). Beta-subunit of the KAR heterotetramer complex, responsible for the 3-ketoacyl-ACP reductase activity of the mtFAS, reduces 3-oxoacyl-[ACP] to (3R)-hydroxyacyl-[ACP] in a NADPH-dependent manner with no chain length preference, thereby participating in mitochondrial fatty acid biosynthesis. The homotetramer has NADPH-dependent quinone reductase activity (in vitro), hence could play a role in protection against cytotoxicity of exogenous quinones. As a heterotetramer, it can also reduce 9,10-phenanthrenequinone, 1,4-benzoquinone and various other o-quinones and p-quinones (in vitro). This chain is 3-oxoacyl-[acyl-carrier-protein] reductase (CBR4), found in Bos taurus (Bovine).